We begin with the raw amino-acid sequence, 474 residues long: MNLAVAAALPSVTPRTGVVLPRSSRRHCPRGVVPRAASSSVSSFTSPSAAAAPIYTPTPQDRSLRTPHSGYHFDGTARPFFEGWYFKVSIPECRQSFCFMYSVENPLFRDGMSDLDKLLYRPRFTGVGAQILGADDKYICQFSEKSNNFWGSRHELMLGNTFISNKESTPPQGEVPPQDFSRRVLEGFQVTPIWHQGFIRDDGRSNYVPNVQTARWEYSTRPVYGWGDVKSKQLSTAGWLAAFPFFEPHWQICMASGLSTGWIEWDGERFEFENAPSYSEKNWGGGFPRKWYWIQCNVFPGASGEVSLTAAGGLRKIGLGDTYESPSLIGIHYEGQFFEFVPWTGTVSWDIGLWGLWKMSGENKTHLVEIEATTAESGTALRAPTIEAGLVPACKDTCYGDLRLQLWEKKYDGSKGEMILDATSNMAALEVGGGPWFNGWKGTTVVNEVVNNIVGTPVDVESLLPIPFLKPPGL.

Residues 1–65 (MNLAVAAALP…TPTPQDRSLR (65 aa)) constitute a chloroplast transit peptide.

As to expression, present in all green tissues, both in bundle sheath and in mesophyll cells.

The protein resides in the plastid. The protein localises to the chloroplast. It catalyses the reaction gamma-tocopherol = 2,3-dimethyl-6-phytylbenzene-1,4-diol. Its pathway is cofactor biosynthesis; tocopherol biosynthesis. Its function is as follows. Involved in the synthesis of tocopherols (vitamin E), which presumably protect photosynthetic complexes from oxidative stress. Catalyzes the conversion of 2,3-dimethyl-5-phytyl-1,4-hydroquinone (DMPQ) to gamma-tocopherol. The polypeptide is Tocopherol cyclase, chloroplastic (Zea mays (Maize)).